The chain runs to 131 residues: uncharacterized protein (131 aa).

The HTH hxlR-type domain occupies 26-124 (CSVEVAVNEI…WGKMYGSHQE (99 aa)).

This is an uncharacterized protein from Methanothermobacter thermautotrophicus (strain ATCC 29096 / DSM 1053 / JCM 10044 / NBRC 100330 / Delta H) (Methanobacterium thermoautotrophicum).